We begin with the raw amino-acid sequence, 300 residues long: Transcription factor E2F5 (300 aa).

The DNA-binding element occupies G2–G73. The segment at L31–L53 is leucine-zipper. A DEF box motif is present at residues D36–G73. The dimerization stretch occupies residues A74–I170. Residues S191–G250 form a disordered region. Positions D203–T221 are enriched in low complexity. Over residues R235–E246 the composition is skewed to polar residues. The tract at residues T242–Y300 is transactivation. The segment at D277–D294 is RBL2 association.

It belongs to the E2F/DP family. In terms of assembly, component of the DRTF1/E2F transcription factor complex. Binds cooperatively with DP-1 to E2F sites. Interaction with retinoblastoma protein RB1 or proteins RBL1 and RBL2 inhibits the E2F transactivation domain. Component of the DREAM complex (also named LINC complex) at least composed of E2F4, E2F5, LIN9, LIN37, LIN52, LIN54, MYBL1, MYBL2, RBL1, RBL2, RBBP4, TFDP1 and TFDP2. The complex exists in quiescent cells where it represses cell cycle-dependent genes. It dissociates in S phase when LIN9, LIN37, LIN52 and LIN54 form a subcomplex that binds to MYBL2. Found in placenta followed by kidney, lung and brain.

Its subcellular location is the nucleus. Its function is as follows. Transcriptional activator that binds to E2F sites, these sites are present in the promoter of many genes whose products are involved in cell proliferation. May mediate growth factor-initiated signal transduction. It is likely involved in the early responses of resting cells to growth factor stimulation. Specifically required for multiciliate cell differentiation: together with MCIDAS and E2F5, binds and activate genes required for centriole biogenesis. This is Transcription factor E2F5 (E2f5) from Rattus norvegicus (Rat).